Here is a 102-residue protein sequence, read N- to C-terminus: NADH-quinone oxidoreductase subunit K (102 aa).

3 consecutive transmembrane segments (helical) span residues 5 to 25 (LAHYLILGAILFAIGIFGIFL), 31 to 51 (IILLMSIELMLLAVNMNFVAF), and 62 to 82 (VFVFFILTVAAAEAAIGLAIL).

This sequence belongs to the complex I subunit 4L family. As to quaternary structure, NDH-1 is composed of 14 different subunits. Subunits NuoA, H, J, K, L, M, N constitute the membrane sector of the complex.

It is found in the cell inner membrane. It catalyses the reaction a quinone + NADH + 5 H(+)(in) = a quinol + NAD(+) + 4 H(+)(out). In terms of biological role, NDH-1 shuttles electrons from NADH, via FMN and iron-sulfur (Fe-S) centers, to quinones in the respiratory chain. The immediate electron acceptor for the enzyme in this species is believed to be ubiquinone. Couples the redox reaction to proton translocation (for every two electrons transferred, four hydrogen ions are translocated across the cytoplasmic membrane), and thus conserves the redox energy in a proton gradient. The sequence is that of NADH-quinone oxidoreductase subunit K from Bordetella avium (strain 197N).